Here is a 408-residue protein sequence, read N- to C-terminus: Guanine nucleotide-binding protein alpha-14 subunit (408 aa).

Residues 39–46 (HSEELEAK), 79–86 (GGPLSGKS), 201–205 (TRIAD), 216–222 (VHSRKAT), 241–245 (DVGGQ), 285–288 (FPKF), 325–328 (NKVD), and A380 contribute to the GTP site. One can recognise a G-alpha domain in the interval 71–408 (SHIKILILGG…KANAKATGLS (338 aa)). A G1 motif region spans residues 74-87 (KILILGGPLSGKST). Position 86 (S86) interacts with Mg(2+). Residues 214–222 (DIVHSRKAT) form a G2 motif region. Residue T222 participates in Mg(2+) binding. Residues 237–246 (LLMIDVGGQR) form a G3 motif region. A G4 motif region spans residues 321-328 (LLFFNKVD). The G5 motif stretch occupies residues 378-383 (TTATNT).

It belongs to the G-alpha family. In terms of assembly, g proteins are composed of 3 units; alpha, beta and gamma. The alpha chain contains the guanine nucleotide binding site. Interacts with the dopamine receptor dop-2 (via C-terminus); the interaction is direct.

Its function is as follows. Guanine nucleotide-binding proteins (G proteins) are involved as modulators or transducers in various transmembrane signaling systems. In association with the G-protein coupled dopamine receptor dop-2, modulates two types of learning: touch habituation and chemosensory associative conditioning. The polypeptide is Guanine nucleotide-binding protein alpha-14 subunit (Caenorhabditis elegans).